We begin with the raw amino-acid sequence, 386 residues long: Acetylornithine aminotransferase (386 aa).

Pyridoxal 5'-phosphate is bound by residues 96–97 (GA) and F123. A N(2)-acetyl-L-ornithine-binding site is contributed by R126. 208–211 (DEVQ) is a binding site for pyridoxal 5'-phosphate. Position 237 is an N6-(pyridoxal phosphate)lysine (K237). A N(2)-acetyl-L-ornithine-binding site is contributed by S265. A pyridoxal 5'-phosphate-binding site is contributed by T266.

The protein belongs to the class-III pyridoxal-phosphate-dependent aminotransferase family. ArgD subfamily. As to quaternary structure, homodimer. It depends on pyridoxal 5'-phosphate as a cofactor.

It is found in the cytoplasm. The catalysed reaction is N(2)-acetyl-L-ornithine + 2-oxoglutarate = N-acetyl-L-glutamate 5-semialdehyde + L-glutamate. It functions in the pathway amino-acid biosynthesis; L-arginine biosynthesis; N(2)-acetyl-L-ornithine from L-glutamate: step 4/4. This Bacillus anthracis protein is Acetylornithine aminotransferase.